Consider the following 134-residue polypeptide: Interleukin-5 (134 aa).

Residues 1 to 19 form the signal peptide; it reads MRMLLHLSLLALGASYMYA. An O-linked (GalNAc...) threonine glycan is attached at T22. 2 N-linked (GlcNAc...) asparagine glycosylation sites follow: N47 and N90.

Belongs to the IL-5 family. In terms of assembly, homodimer; disulfide-linked. Interacts with IL5RA. Interacts with CSF2RB.

It localises to the secreted. Functionally, homodimeric cytokine expressed predominantly by T-lymphocytes and NK cells that plays an important role in the survival, differentiation, and chemotaxis of eosinophils. Also acts on activated and resting B-cells to induce immunoglobulin production, growth, and differentiation. Mechanistically, exerts its biological effects through a receptor composed of IL5RA subunit and the cytokine receptor common subunit beta/CSF2RB. Binding to the receptor leads to activation of various kinases including LYN, SYK and JAK2 and thereby propagates signals through the RAS-MAPK and JAK-STAT5 pathways respectively. This chain is Interleukin-5 (IL5), found in Cercocebus atys (Sooty mangabey).